The chain runs to 361 residues: Ankyrin repeat domain-containing protein 16 (361 aa).

9 ANK repeats span residues 36–66 (AGDT…DIEA), 70–99 (DYKR…VVDS), 103–132 (ADWT…NPLL), 136–165 (DGWN…DAWK), 170–200 (IRRT…EPDC), 204–233 (CGVT…ACSS), 238–268 (MGAQ…DVDV), 273–302 (SQLT…DINS), and 306–335 (RNRS…KDSE).

As to quaternary structure, interacts with AARS; the interaction is direct. In terms of tissue distribution, widely expressed in brain (at protein level).

The protein resides in the cytoplasm. Its subcellular location is the nucleus. In terms of biological role, required to prevent the misactivation of serine (Ser) with tRNA(Ala) by promoting the hydrolysis of Ser-mischarged tRNA(Ala), thereby playing a role in translational fidelity. Binds directly to the catalytic domain of AARS/AlaRS and captures Ser that is misactivated by AARS/AlaRS, preventing the charging of Ser adenylates to tRNA(Ala) and precluding Ser misincorporation in nascent peptides. The polypeptide is Ankyrin repeat domain-containing protein 16 (Mus musculus (Mouse)).